The following is a 267-amino-acid chain: Undecaprenyl-diphosphatase (267 aa).

8 helical membrane-spanning segments follow: residues 1-21 (MTYFEAFFLALLQGFTEFLPI), 39-59 (QGLAFDVAVHVGTLAAVVIYF), 83-103 (SNLAWLIVLATIPAALFGLLF), 111-131 (LRSAWVIAATTIVFGLLLWWV), 149-169 (ALFLGIAQAMAMIPGTSRSGI), 189-209 (FLMSIPIITLAGSYLGLKLAM), 218-238 (LLSTGVIVSFISAYICIHFFL), and 246-266 (MMPFVIYRILLGSSLLVWLAL).

Belongs to the UppP family.

The protein localises to the cell inner membrane. The catalysed reaction is di-trans,octa-cis-undecaprenyl diphosphate + H2O = di-trans,octa-cis-undecaprenyl phosphate + phosphate + H(+). Catalyzes the dephosphorylation of undecaprenyl diphosphate (UPP). Confers resistance to bacitracin. This chain is Undecaprenyl-diphosphatase, found in Aliivibrio fischeri (strain ATCC 700601 / ES114) (Vibrio fischeri).